A 310-amino-acid chain; its full sequence is Probable L,D-transpeptidase ErfK/SrfK (310 aa).

Residues 1–21 (MRRVNILCSFALLFASHTSLA) form the signal peptide. One can recognise a L,D-TPase catalytic domain in the interval 96–231 (KGIVVNVAEM…VPVGTRVQII (136 aa)). H191 (proton donor/acceptor) is an active-site residue. Residue C207 is the Nucleophile of the active site.

This sequence belongs to the YkuD family. Interacts with DsbG.

It localises to the periplasm. It functions in the pathway cell wall biogenesis; peptidoglycan biosynthesis. Responsible, at least in part, for anchoring of the major outer membrane lipoprotein (Lpp, also known as the Braun lipoprotein) to the peptidoglycan via a meso-diaminopimelyl-L-Lys- bond on the terminal residue of Lpp. In Escherichia coli (strain K12), this protein is Probable L,D-transpeptidase ErfK/SrfK (erfK).